The chain runs to 235 residues: Heme oxygenase (235 aa).

Histidine 19 provides a ligand contact to heme b.

The protein belongs to the heme oxygenase family.

It is found in the plastid. The protein resides in the chloroplast. The enzyme catalyses heme b + 3 reduced [NADPH--hemoprotein reductase] + 3 O2 = biliverdin IXalpha + CO + Fe(2+) + 3 oxidized [NADPH--hemoprotein reductase] + 3 H2O + H(+). Catalyzes the opening of the heme ring with the release of iron. Key enzyme in the synthesis of the chromophoric part of the photosynthetic antennae. This is Heme oxygenase (pbsA) from Rhodella violacea (Red alga).